We begin with the raw amino-acid sequence, 255 residues long: Anamorsin homolog (255 aa).

The segment at Met-1–Asp-163 is N-terminal SAM-like domain. A linker region spans residues Lys-164–Tyr-185. [2Fe-2S] cluster is bound by residues Cys-188, Cys-195, Cys-198, and Cys-200. Positions Cys-188–Cys-200 are fe-S binding site A. [4Fe-4S] cluster is bound by residues Cys-224, Cys-227, Cys-235, and Cys-238. 2 short sequence motifs (cx2C motif) span residues Cys-224–Cys-227 and Cys-235–Cys-238. The fe-S binding site B stretch occupies residues Cys-224 to Cys-238.

Belongs to the anamorsin family. In terms of assembly, monomer. Requires [2Fe-2S] cluster as cofactor. The cofactor is [4Fe-4S] cluster.

It is found in the cytoplasm. The protein localises to the mitochondrion intermembrane space. Functionally, component of the cytosolic iron-sulfur (Fe-S) protein assembly (CIA) machinery. Required for the maturation of extramitochondrial Fe-S proteins. Part of an electron transfer chain functioning in an early step of cytosolic Fe-S biogenesis, facilitating the de novo assembly of a [4Fe-4S] cluster on the cytosolic Fe-S scaffold complex. Electrons are transferred from NADPH via a FAD- and FMN-containing diflavin oxidoreductase. Together with the diflavin oxidoreductase, also required for the assembly of the diferric tyrosyl radical cofactor of ribonucleotide reductase (RNR), probably by providing electrons for reduction during radical cofactor maturation in the catalytic small subunit. This chain is Anamorsin homolog, found in Theileria annulata.